Reading from the N-terminus, the 366-residue chain is Anhydro-N-acetylmuramic acid kinase (366 aa).

10–17 (GTSMDGID) is a binding site for ATP.

The protein belongs to the anhydro-N-acetylmuramic acid kinase family.

It carries out the reaction 1,6-anhydro-N-acetyl-beta-muramate + ATP + H2O = N-acetyl-D-muramate 6-phosphate + ADP + H(+). Its pathway is amino-sugar metabolism; 1,6-anhydro-N-acetylmuramate degradation. It participates in cell wall biogenesis; peptidoglycan recycling. Functionally, catalyzes the specific phosphorylation of 1,6-anhydro-N-acetylmuramic acid (anhMurNAc) with the simultaneous cleavage of the 1,6-anhydro ring, generating MurNAc-6-P. Is required for the utilization of anhMurNAc either imported from the medium or derived from its own cell wall murein, and thus plays a role in cell wall recycling. The polypeptide is Anhydro-N-acetylmuramic acid kinase (Legionella pneumophila (strain Corby)).